We begin with the raw amino-acid sequence, 394 residues long: RNA-binding motif protein, X-linked-like-2 (394 aa).

An RRM domain is found at 8-86; that stretch reads GKLFIGGLNL…KAIKVAQATK (79 aa). The segment covering 67–78 has biased composition (basic and acidic residues); the sequence is RDMNGKSLDGKA. The tract at residues 67–394 is disordered; it reads RDMNGKSLDG…MERGGGRSRY (328 aa). The segment covering 150–165 has biased composition (pro residues); sequence RGPPPPPRRAGPPPKR. Basic and acidic residues-rich tracts occupy residues 196–231 and 239–285; these read PRREPPPPRRDPYLGPRDEGYSSRDGYSSRDYREPR and EYTH…REPF. Residues 321 to 333 show a composition bias toward low complexity; it reads YSGGRDSYSSSYG. Basic and acidic residues-rich tracts occupy residues 334-350 and 383-394; these read RSDRYSRGRDRVGRPDR and GRMERGGGRSRY.

It localises to the nucleus. The protein is RNA-binding motif protein, X-linked-like-2 (RBMXL2) of Macaca fascicularis (Crab-eating macaque).